The chain runs to 129 residues: Lysozyme C (129 aa).

Residues 1–129 enclose the C-type lysozyme domain; sequence KIYTRCELAA…VSKWIKDCKL (129 aa). Disulfide bonds link cysteine 6–cysteine 127, cysteine 30–cysteine 115, cysteine 64–cysteine 80, and cysteine 76–cysteine 94. Active-site residues include glutamate 35 and aspartate 52.

Belongs to the glycosyl hydrolase 22 family. Monomer.

It localises to the secreted. The catalysed reaction is Hydrolysis of (1-&gt;4)-beta-linkages between N-acetylmuramic acid and N-acetyl-D-glucosamine residues in a peptidoglycan and between N-acetyl-D-glucosamine residues in chitodextrins.. Lysozymes have primarily a bacteriolytic function; those in tissues and body fluids are associated with the monocyte-macrophage system and enhance the activity of immunoagents. The chain is Lysozyme C (LYZ) from Crax fasciolata (Bare-faced curassow).